Consider the following 400-residue polypeptide: Phosphoglycerate kinase (400 aa).

Substrate contacts are provided by residues 22-24 (DFN), arginine 38, 61-64 (HLGR), arginine 120, and arginine 153. Residues lysine 206, glycine 297, glutamate 328, and 354 to 357 (GGDT) contribute to the ATP site.

Belongs to the phosphoglycerate kinase family. In terms of assembly, monomer.

It is found in the cytoplasm. It carries out the reaction (2R)-3-phosphoglycerate + ATP = (2R)-3-phospho-glyceroyl phosphate + ADP. It participates in carbohydrate degradation; glycolysis; pyruvate from D-glyceraldehyde 3-phosphate: step 2/5. The polypeptide is Phosphoglycerate kinase (Campylobacter curvus (strain 525.92)).